The chain runs to 403 residues: Nucleolar protein 13 (403 aa).

2 stretches are compositionally biased toward basic and acidic residues: residues methionine 1 to glutamate 35 and lysine 75 to glutamine 97. 2 disordered regions span residues methionine 1–lysine 43 and isoleucine 72–lysine 116. At serine 2 the chain carries N-acetylserine. Position 2 is a phosphoserine (serine 2). Polar residues predominate over residues glutamate 99–glycine 108. At threonine 105 the chain carries Phosphothreonine. 2 RRM domains span residues tyrosine 125 to asparagine 219 and arginine 239 to aspartate 317. The span at glutamate 313–asparagine 329 shows a compositional bias: basic and acidic residues. The disordered stretch occupies residues glutamate 313–aspartate 403. A compositionally biased stretch (polar residues) spans valine 330–lysine 344. The residue at position 335 (serine 335) is a Phosphoserine. The span at glycine 345 to arginine 361 shows a compositional bias: basic and acidic residues. Positions aspartate 371–alanine 381 are enriched in polar residues.

It is found in the nucleus. The protein resides in the nucleolus. This Saccharomyces cerevisiae (strain ATCC 204508 / S288c) (Baker's yeast) protein is Nucleolar protein 13 (NOP13).